The following is a 702-amino-acid chain: Phosphate acetyltransferase (702 aa).

The interval 375–702 (AFRYELIQRA…QATQSAADCG (328 aa)) is phosphate acetyltransferase.

In the N-terminal section; belongs to the CobB/CobQ family. The protein in the C-terminal section; belongs to the phosphate acetyltransferase and butyryltransferase family. Homohexamer.

The protein localises to the cytoplasm. It catalyses the reaction acetyl-CoA + phosphate = acetyl phosphate + CoA. It participates in metabolic intermediate biosynthesis; acetyl-CoA biosynthesis; acetyl-CoA from acetate: step 2/2. In terms of biological role, involved in acetate metabolism. In Deinococcus radiodurans (strain ATCC 13939 / DSM 20539 / JCM 16871 / CCUG 27074 / LMG 4051 / NBRC 15346 / NCIMB 9279 / VKM B-1422 / R1), this protein is Phosphate acetyltransferase (pta).